Here is a 161-residue protein sequence, read N- to C-terminus: MKRNEEYCGLHKLKMEIFNVEELINMKPFKNMNKITINQKDNCILANRCFVKIDTPRYIPLTSISSSNIIRIRNHDFTLSELLYSPFHFQQPQFQYLLPGFVLTCIDKVSKQQKECKYCISNRGDDDSLSINLFIPTINKSIYIIIGLRMKNFWKPKFEIE.

It belongs to the orthopoxvirus OPG058 family.

This Homo sapiens (Human) protein is Protein OPG060 (OPG060).